We begin with the raw amino-acid sequence, 204 residues long: Holliday junction branch migration complex subunit RuvA (204 aa).

The tract at residues 1-64 is domain I; sequence MIGRLQGILL…EDAHLLFGFA (64 aa). The segment at 65–143 is domain II; the sequence is QKTDRTLFRE…GVKQSDFFVE (79 aa). The interval 144–155 is flexible linker; the sequence is STHIPLSPSIES. Positions 156 to 204 are domain III; that stretch reads HSESSSDEAISALIALGYKPAEAEKMVKRVAKPELTSEQVIREALKAAL.

Belongs to the RuvA family. Homotetramer. Forms an RuvA(8)-RuvB(12)-Holliday junction (HJ) complex. HJ DNA is sandwiched between 2 RuvA tetramers; dsDNA enters through RuvA and exits via RuvB. An RuvB hexamer assembles on each DNA strand where it exits the tetramer. Each RuvB hexamer is contacted by two RuvA subunits (via domain III) on 2 adjacent RuvB subunits; this complex drives branch migration. In the full resolvosome a probable DNA-RuvA(4)-RuvB(12)-RuvC(2) complex forms which resolves the HJ.

Its subcellular location is the cytoplasm. The RuvA-RuvB-RuvC complex processes Holliday junction (HJ) DNA during genetic recombination and DNA repair, while the RuvA-RuvB complex plays an important role in the rescue of blocked DNA replication forks via replication fork reversal (RFR). RuvA specifically binds to HJ cruciform DNA, conferring on it an open structure. The RuvB hexamer acts as an ATP-dependent pump, pulling dsDNA into and through the RuvAB complex. HJ branch migration allows RuvC to scan DNA until it finds its consensus sequence, where it cleaves and resolves the cruciform DNA. In Haemophilus influenzae (strain PittGG), this protein is Holliday junction branch migration complex subunit RuvA.